The primary structure comprises 368 residues: o-succinylbenzoate synthase (368 aa).

The active-site Proton donor is K183. The Mg(2+) site is built by D213, E239, and D264. K290 acts as the Proton acceptor in catalysis.

The protein belongs to the mandelate racemase/muconate lactonizing enzyme family. MenC type 1 subfamily. In terms of assembly, monomer. The cofactor is a divalent metal cation.

It catalyses the reaction (1R,6R)-6-hydroxy-2-succinyl-cyclohexa-2,4-diene-1-carboxylate = 2-succinylbenzoate + H2O. It participates in quinol/quinone metabolism; 1,4-dihydroxy-2-naphthoate biosynthesis; 1,4-dihydroxy-2-naphthoate from chorismate: step 4/7. It functions in the pathway cofactor biosynthesis; phylloquinone biosynthesis. Converts 2-succinyl-6-hydroxy-2,4-cyclohexadiene-1-carboxylate (SHCHC) to 2-succinylbenzoate (OSB). Does not show N-succinylamino acid racemase (NSAR) activity with N-succinyl-L-phenylglycine as substrate. This chain is o-succinylbenzoate synthase, found in Desulfotalea psychrophila (strain LSv54 / DSM 12343).